A 614-amino-acid polypeptide reads, in one-letter code: Dihydroxy-acid dehydratase (614 aa).

Asp81 contacts Mg(2+). [2Fe-2S] cluster is bound at residue Cys122. 2 residues coordinate Mg(2+): Asp123 and Lys124. Lys124 is subject to N6-carboxylysine. Residue Cys195 participates in [2Fe-2S] cluster binding. Glu491 contributes to the Mg(2+) binding site. The Proton acceptor role is filled by Ser517.

The protein belongs to the IlvD/Edd family. In terms of assembly, homodimer. [2Fe-2S] cluster serves as cofactor. The cofactor is Mg(2+).

It carries out the reaction (2R)-2,3-dihydroxy-3-methylbutanoate = 3-methyl-2-oxobutanoate + H2O. It catalyses the reaction (2R,3R)-2,3-dihydroxy-3-methylpentanoate = (S)-3-methyl-2-oxopentanoate + H2O. Its pathway is amino-acid biosynthesis; L-isoleucine biosynthesis; L-isoleucine from 2-oxobutanoate: step 3/4. It functions in the pathway amino-acid biosynthesis; L-valine biosynthesis; L-valine from pyruvate: step 3/4. Its function is as follows. Functions in the biosynthesis of branched-chain amino acids. Catalyzes the dehydration of (2R,3R)-2,3-dihydroxy-3-methylpentanoate (2,3-dihydroxy-3-methylvalerate) into 2-oxo-3-methylpentanoate (2-oxo-3-methylvalerate) and of (2R)-2,3-dihydroxy-3-methylbutanoate (2,3-dihydroxyisovalerate) into 2-oxo-3-methylbutanoate (2-oxoisovalerate), the penultimate precursor to L-isoleucine and L-valine, respectively. The chain is Dihydroxy-acid dehydratase from Actinobacillus succinogenes (strain ATCC 55618 / DSM 22257 / CCUG 43843 / 130Z).